Here is a 397-residue protein sequence, read N- to C-terminus: Phosphoglycerate kinase (397 aa).

Residues 21 to 23 (DFN), Arg36, 59 to 62 (HCGR), Arg118, and Arg151 contribute to the substrate site. ATP-binding positions include Lys201, Glu323, and 353-356 (GGDT).

The protein belongs to the phosphoglycerate kinase family. Monomer.

It is found in the cytoplasm. The enzyme catalyses (2R)-3-phosphoglycerate + ATP = (2R)-3-phospho-glyceroyl phosphate + ADP. It participates in carbohydrate degradation; glycolysis; pyruvate from D-glyceraldehyde 3-phosphate: step 2/5. The polypeptide is Phosphoglycerate kinase (Bartonella quintana (strain Toulouse) (Rochalimaea quintana)).